The chain runs to 167 residues: UPF0179 protein PAE0681 (167 aa).

The tract at residues 142–167 (PSPSGSSISATSQGPSRAPPSRRLLK) is disordered. Residues 145–157 (SGSSISATSQGPS) are compositionally biased toward low complexity.

This sequence belongs to the UPF0179 family.

The chain is UPF0179 protein PAE0681 from Pyrobaculum aerophilum (strain ATCC 51768 / DSM 7523 / JCM 9630 / CIP 104966 / NBRC 100827 / IM2).